Reading from the N-terminus, the 98-residue chain is Integration host factor subunit beta (98 aa).

Belongs to the bacterial histone-like protein family. As to quaternary structure, heterodimer of an alpha and a beta chain.

This protein is one of the two subunits of integration host factor, a specific DNA-binding protein that functions in genetic recombination as well as in transcriptional and translational control. In Pseudomonas fluorescens (strain Pf0-1), this protein is Integration host factor subunit beta.